The primary structure comprises 447 residues: Putative branched-chain amino acid carrier protein SE_1090 (447 aa).

Transmembrane regions (helical) follow at residues 5–25 (TWII…LIFP), 40–60 (ILAF…VGAL), 74–94 (PRFS…LFAI), 114–134 (GNLA…YLCL), 143–163 (IGSL…IKGF), 193–213 (GYLT…VNAI), 229–249 (IIAG…LGYI), 290–310 (LLGI…IVSV), 317–337 (ILPK…SFIL), 350–370 (VPVL…ILIA), 382–402 (IPLI…QGWI), and 417–437 (LEWF…SYFV).

This sequence belongs to the branched chain amino acid transporter family.

Its subcellular location is the cell membrane. Its function is as follows. Component of the transport system for branched-chain amino acids (leucine, isoleucine and valine), which is coupled to a proton motive force. The protein is Putative branched-chain amino acid carrier protein SE_1090 of Staphylococcus epidermidis (strain ATCC 12228 / FDA PCI 1200).